A 405-amino-acid chain; its full sequence is DNA polymerase IV 1 (405 aa).

The 181-residue stretch at 23-203 (IAHIDCDAFY…RPVTTIWGVG (181 aa)) folds into the UmuC domain. Mg(2+) is bound by residues D27 and D120. Residue E121 is part of the active site.

It belongs to the DNA polymerase type-Y family. In terms of assembly, monomer. Mg(2+) serves as cofactor.

The protein resides in the cytoplasm. The catalysed reaction is DNA(n) + a 2'-deoxyribonucleoside 5'-triphosphate = DNA(n+1) + diphosphate. Its function is as follows. Poorly processive, error-prone DNA polymerase involved in untargeted mutagenesis. Copies undamaged DNA at stalled replication forks, which arise in vivo from mismatched or misaligned primer ends. These misaligned primers can be extended by PolIV. Exhibits no 3'-5' exonuclease (proofreading) activity. May be involved in translesional synthesis, in conjunction with the beta clamp from PolIII. The polypeptide is DNA polymerase IV 1 (dinB1) (Agrobacterium fabrum (strain C58 / ATCC 33970) (Agrobacterium tumefaciens (strain C58))).